A 307-amino-acid chain; its full sequence is Aspartate carbamoyltransferase catalytic subunit (307 aa).

Residues Arg59 and Thr60 each coordinate carbamoyl phosphate. Lys87 lines the L-aspartate pocket. Positions 109, 137, and 140 each coordinate carbamoyl phosphate. Positions 173 and 223 each coordinate L-aspartate. 2 residues coordinate carbamoyl phosphate: Gly266 and Pro267.

The protein belongs to the aspartate/ornithine carbamoyltransferase superfamily. ATCase family. As to quaternary structure, heterododecamer (2C3:3R2) of six catalytic PyrB chains organized as two trimers (C3), and six regulatory PyrI chains organized as three dimers (R2).

The catalysed reaction is carbamoyl phosphate + L-aspartate = N-carbamoyl-L-aspartate + phosphate + H(+). It functions in the pathway pyrimidine metabolism; UMP biosynthesis via de novo pathway; (S)-dihydroorotate from bicarbonate: step 2/3. Functionally, catalyzes the condensation of carbamoyl phosphate and aspartate to form carbamoyl aspartate and inorganic phosphate, the committed step in the de novo pyrimidine nucleotide biosynthesis pathway. This Helicobacter pylori (strain HPAG1) protein is Aspartate carbamoyltransferase catalytic subunit.